We begin with the raw amino-acid sequence, 107 residues long: uncharacterized protein (107 aa).

Residues glutamine 86–valine 107 are disordered. Over residues glutamate 92–valine 107 the composition is skewed to acidic residues.

This is an uncharacterized protein from Rickettsia prowazekii (strain Madrid E).